A 148-amino-acid chain; its full sequence is Antitoxin Xre (148 aa).

The protein belongs to the MbcA/ParS/Xre antitoxin family. As to quaternary structure, homodimer. Forms a complex with cognate toxin Rse.

Antitoxin component of a type II toxin-antitoxin (TA) system. Neutralizes the NAD(+) depleting activity of cognate toxin Res. This Photorhabdus laumondii subsp. laumondii (strain DSM 15139 / CIP 105565 / TT01) (Photorhabdus luminescens subsp. laumondii) protein is Antitoxin Xre.